Reading from the N-terminus, the 383-residue chain is DNA-directed RNA polymerase subunit alpha (383 aa).

Residues 1–240 are alpha N-terminal domain (alpha-NTD); that stretch reads MEKKTGLIQF…NLFHQISPPL (240 aa). Positions 306 to 383 are alpha C-terminal domain (alpha-CTD); sequence IDKQMNDSVN…RFNMELLPTK (78 aa).

The protein belongs to the RNA polymerase alpha chain family. In plastids the minimal PEP RNA polymerase catalytic core is composed of four subunits: alpha, beta, beta', and beta''. When a (nuclear-encoded) sigma factor is associated with the core the holoenzyme is formed, which can initiate transcription.

The protein localises to the plastid. The protein resides in the chloroplast. It carries out the reaction RNA(n) + a ribonucleoside 5'-triphosphate = RNA(n+1) + diphosphate. DNA-dependent RNA polymerase catalyzes the transcription of DNA into RNA using the four ribonucleoside triphosphates as substrates. The polypeptide is DNA-directed RNA polymerase subunit alpha (Staurastrum punctulatum (Green alga)).